Here is a 241-residue protein sequence, read N- to C-terminus: GTP cyclohydrolase III (241 aa).

This sequence belongs to the archaeal-type GTP cyclohydrolase family.

The enzyme catalyses GTP + 3 H2O = 2-amino-5-formylamino-6-(5-phospho-D-ribosylamino)pyrimidin-4(3H)-one + 2 phosphate + 2 H(+). Functionally, catalyzes the formation of 2-amino-5-formylamino-6-ribofuranosylamino-4(3H)-pyrimidinone ribonucleotide monophosphate and inorganic phosphate from GTP. Also has an independent pyrophosphate phosphohydrolase activity. This is GTP cyclohydrolase III from Aeropyrum pernix (strain ATCC 700893 / DSM 11879 / JCM 9820 / NBRC 100138 / K1).